We begin with the raw amino-acid sequence, 508 residues long: Histidine ammonia-lyase (508 aa).

The segment at residues 141–143 (ASG) is a cross-link (5-imidazolinone (Ala-Gly)). Residue serine 142 is modified to 2,3-didehydroalanine (Ser).

Belongs to the PAL/histidase family. Contains an active site 4-methylidene-imidazol-5-one (MIO), which is formed autocatalytically by cyclization and dehydration of residues Ala-Ser-Gly.

The protein localises to the cytoplasm. The catalysed reaction is L-histidine = trans-urocanate + NH4(+). Its pathway is amino-acid degradation; L-histidine degradation into L-glutamate; N-formimidoyl-L-glutamate from L-histidine: step 1/3. This Bacillus subtilis (strain 168) protein is Histidine ammonia-lyase (hutH).